The primary structure comprises 149 residues: Arginine repressor (149 aa).

This sequence belongs to the ArgR family.

The protein resides in the cytoplasm. Its pathway is amino-acid biosynthesis; L-arginine biosynthesis [regulation]. Its function is as follows. Regulates arginine biosynthesis genes. The polypeptide is Arginine repressor (Geobacillus thermodenitrificans (strain NG80-2)).